A 239-amino-acid polypeptide reads, in one-letter code: mRNA turnover protein 4 homolog (239 aa).

The disordered stretch occupies residues 216 to 239 (QQMDDDLPESAPESEGESEEEDDS). The segment covering 218–239 (MDDDLPESAPESEGESEEEDDS) has biased composition (acidic residues). Phosphoserine occurs at positions 225, 229, and 233.

The protein belongs to the universal ribosomal protein uL10 family. As to quaternary structure, associates with the pre-60S ribosomal particle. Interacts with MINAS-60 (product of an alternative open reading frame of RBM10).

It localises to the nucleus. Its subcellular location is the nucleolus. It is found in the cytoplasm. In terms of biological role, component of the ribosome assembly machinery. Nuclear paralog of the ribosomal protein P0, it binds pre-60S subunits at an early stage of assembly in the nucleolus, and is replaced by P0 in cytoplasmic pre-60S subunits and mature 80S ribosomes. The protein is mRNA turnover protein 4 homolog (Mrto4) of Mus musculus (Mouse).